We begin with the raw amino-acid sequence, 746 residues long: Root phototropism protein 3 (746 aa).

A disordered region spans residues Met-1–Gly-24. Gly residues predominate over residues Gly-9–Arg-19. Positions Ser-54 to Ala-122 constitute a BTB domain. In terms of domain architecture, NPH3 spans Asp-250 to Lys-605. Residues Glu-461–Asn-500 form a disordered region. The span at Ser-466 to Ser-478 shows a compositional bias: low complexity. Tyr-546 bears the Phosphotyrosine mark. A disordered region spans residues Ser-708 to Ser-746. Basic residues predominate over residues Pro-735 to Ser-746.

This sequence belongs to the NPH3 family. In terms of assembly, interacts with PKS1, PKS2, RPT2, PHOT1 and PHOT2. Subunit of a complex made of CAR6, PHOT1 and RPT3/NPH3. In terms of processing, phosphorylated in the dark. As to expression, expressed in hypocotyls, guard cells and mesophyll cells.

The protein localises to the cell membrane. Its pathway is protein modification; protein ubiquitination. Functionally, may act as a substrate-specific adapter of an E3 ubiquitin-protein ligase complex (CUL3-RBX1-BTB) which mediates the ubiquitination and subsequent proteasomal degradation of target proteins. Signal transducer of the phototropic response and photo-induced movements. Involved in the phot1 pathway under low blue light (LBL) fluence rate and in the phot2 pathway under higher fluence rate of blue light (HBL). Necessary for root and hypocotyl phototropisms, but not for the regulation of stomata opening. Not involved in chloroplast accumulation and translocation. This is Root phototropism protein 3 (RPT3) from Arabidopsis thaliana (Mouse-ear cress).